The primary structure comprises 353 residues: Guanine nucleotide-binding protein subunit alpha (353 aa).

Residues 1–26 (MGCGMSTEEKEGKARNEEIENQLKRD) are disordered. The N-myristoyl glycine moiety is linked to residue Gly-2. Residue Cys-3 is the site of S-palmitoyl cysteine attachment. The span at 7 to 26 (TEEKEGKARNEEIENQLKRD) shows a compositional bias: basic and acidic residues. One can recognise a G-alpha domain in the interval 32–353 (NEIKMLLLGA…QENLRLCGLI (322 aa)). Residues 35 to 48 (KMLLLGAGESGKST) form a G1 motif region. GTP contacts are provided by Glu-43, Ser-44, Gly-45, Lys-46, Ser-47, Thr-48, Asp-150, Leu-175, Thr-181, Gly-203, Asn-269, Lys-270, Asp-272, and Ala-325. Ser-47 contacts Mg(2+). The G2 motif stretch occupies residues 173-181 (DVLRSRVKT). Position 181 (Thr-181) interacts with Mg(2+). The interval 196-205 (YRMFDVGGQR) is G3 motif. The interval 265-272 (ILFLNKID) is G4 motif. The interval 323 to 328 (TCATDT) is G5 motif.

This sequence belongs to the G-alpha family. G(q) subfamily. As to quaternary structure, g proteins are composed of 3 units; alpha, beta and gamma. The alpha chain contains the guanine nucleotide binding site. The cofactor is Mg(2+).

Functionally, guanine nucleotide-binding proteins (G proteins) are involved as modulators or transducers in various transmembrane signaling systems. This chain is Guanine nucleotide-binding protein subunit alpha, found in Cryphonectria parasitica (Chestnut blight fungus).